The sequence spans 749 residues: 5-methyltetrahydropteroyltriglutamate--homocysteine methyltransferase (749 aa).

5-methyltetrahydropteroyltri-L-glutamate is bound by residues 15 to 18 (RELK) and Lys114. L-homocysteine is bound by residues 425–427 (IGS) and Glu478. Residues 425–427 (IGS) and Glu478 each bind L-methionine. Trp555 contributes to the 5-methyltetrahydropteroyltri-L-glutamate binding site. Position 593 (Asp593) interacts with L-homocysteine. L-methionine is bound at residue Asp593. Glu599 contributes to the 5-methyltetrahydropteroyltri-L-glutamate binding site. The Zn(2+) site is built by His636, Cys638, and Glu660. Catalysis depends on His689, which acts as the Proton donor. Cys721 contributes to the Zn(2+) binding site.

The protein belongs to the vitamin-B12 independent methionine synthase family. The cofactor is Zn(2+).

It catalyses the reaction 5-methyltetrahydropteroyltri-L-glutamate + L-homocysteine = tetrahydropteroyltri-L-glutamate + L-methionine. It functions in the pathway amino-acid biosynthesis; L-methionine biosynthesis via de novo pathway; L-methionine from L-homocysteine (MetE route): step 1/1. In terms of biological role, catalyzes the transfer of a methyl group from 5-methyltetrahydrofolate to homocysteine resulting in methionine formation. This chain is 5-methyltetrahydropteroyltriglutamate--homocysteine methyltransferase, found in Streptococcus pneumoniae serotype 4 (strain ATCC BAA-334 / TIGR4).